We begin with the raw amino-acid sequence, 438 residues long: MENIALESSFLEYDINEPIKIYTGHFTIEVADDFFEILGEVKIAFLPKARLIFEGAISGNLSKLFEFEKAMKSNNMMINVPGFMKSEVLISGITDGSKGNKVSGILKRSILTSAETKVNRMEFTVVNFVNDLGRRIVHGRFKFSGRTKLKYKDWEIILDKRYDYSNKKIFDRLKNSGGYLITHVGYLKRVDDKLFDTKEVEPLISGLYWLLSFSAGRHVAIPTLEGYHNEEVIWSKYQVPLIDGWTNNITWFPKQKSPSLEHLFPKVIEKQEDPFWNKVLWEVLSWYSQAHSSSIVENKVVSVQVALETLAWVYLIVDRKSNISKSKYKYMNAAEKFREILSRFSIDLSIPKLFIDIKDNYDDGPHLFTVFRNKIVHPTRELDFDNPIDKLHVLYLGVWYLELLTLGILGYEGSYVNRLKVPIIEGVYEFVPWKTRDN.

The chain crosses the membrane as a helical span at residues Leu-391 to Tyr-411.

The protein resides in the cell membrane. This Bacillus subtilis (strain 168) protein is SPbeta prophage-derived uncharacterized protein YopA (yopA).